Reading from the N-terminus, the 247-residue chain is 14-3-3 protein gamma (247 aa).

The residue at position 1 (Met-1) is an N-acetylmethionine. Val-2 carries the post-translational modification N-acetylvaline; in 14-3-3 protein gamma, N-terminally processed. The interaction with SPATA18/MIEAP stretch occupies residues 2–247 (VDREQLVQKA…QDDDGGEGNN (246 aa)). The residue at position 71 (Ser-71) is a Phosphoserine. Tyr-133 bears the Phosphotyrosine mark. Thr-145 is modified (phosphothreonine). Ser-215 carries the phosphoserine modification. Position 234 is a phosphothreonine (Thr-234). Ser-235 is subject to Phosphoserine.

The protein belongs to the 14-3-3 family. As to quaternary structure, homodimer. Part of a complex that contains DSG3, PKP1, YAP1 and YWHAG; the complex is required for localization of DSG3 and YAP1 to the cell membrane in keratinocytes. Interacts with SAMSN1. Interacts with RAF1, SSH1 and CRTC2/TORC2. Interacts with ABL1 (phosphorylated form); the interaction retains it in the cytoplasm. Interacts with GAB2. Interacts with MDM4 (phosphorylated); negatively regulates MDM4 activity toward TP53. Interacts with PKA-phosphorylated AANAT and SIRT2. Interacts with the 'Thr-369' phosphorylated form of DAPK2. Interacts with PI4KB, TBC1D22A and TBC1D22B. Interacts with SLITRK1. Interacts with LRRK2; this interaction is dependent on LRRK2 phosphorylation. Interacts with MARK2 and MARK3. Interacts with MEFV. Interacts with ENDOG, TSC2 and PIK3C3; interaction with ENDOG weakens its interaction with TSC2 and PIK3C3. Interacts with (phosphorylated) WDR24. Interacts with BEST1; this interaction promotes L-glutamate channel activity leading to the positive regulation of NMDA glutamate receptor activity through the L-glutamate secretion. Interacts with PKP1 (when phosphorylated); the interaction results in translocation of PKP1 to the cytoplasm and loss of intercellular adhesion in keratinocytes. Interacts with SPATA18/MIEAP; a protein that also plays a role in MALM. Phosphorylated by various PKC isozymes.

It is found in the cytoplasm. The protein resides in the cytosol. The protein localises to the mitochondrion matrix. Functionally, adapter protein implicated in the regulation of a large spectrum of both general and specialized signaling pathways. Binds to a large number of partners, usually by recognition of a phosphoserine or phosphothreonine motif. Binding generally results in the modulation of the activity of the binding partner. Promotes inactivation of WDR24 component of the GATOR2 complex by binding to phosphorylated WDR24. Participates in the positive regulation of NMDA glutamate receptor activity by promoting the L-glutamate secretion through interaction with BEST1. Reduces keratinocyte intercellular adhesion, via interacting with PKP1 and sequestering it in the cytoplasm, thereby reducing its incorporation into desmosomes. Plays a role in mitochondrial protein catabolic process (also named MALM) that promotes the degradation of damaged proteins inside mitochondria. This is 14-3-3 protein gamma from Bos taurus (Bovine).